Here is a 99-residue protein sequence, read N- to C-terminus: Small ribosomal subunit protein bS20 (99 aa).

It belongs to the bacterial ribosomal protein bS20 family.

Binds directly to 16S ribosomal RNA. This is Small ribosomal subunit protein bS20 from Caldicellulosiruptor bescii (strain ATCC BAA-1888 / DSM 6725 / KCTC 15123 / Z-1320) (Anaerocellum thermophilum).